Consider the following 467-residue polypeptide: MTEVFTIKQCLDGEISIDETVTVRGWVKTRRDSKAGLSFISLHDGSCFSPIQIVATDQLSNYQKEVTKLTAGCSMIATGKLVASQGKGQFFEIQAESIEVVGWVENPDTYPIQAKRHTLEFLREVAHLRPRTNTISAVTRVRHSLAQAIHRFYHEQGFFWVHTPIITASDCEGAGEMFRVSTLDLLNIPKNDKGQIDFSKDFFGRETFLTVSGQLNVEAYCMAMSKVYTFGPTFRAENSNTSRHLAEFWMIEPEIAFANLEDICKLSQNMLRYLCKTVLEERSDDMDFFNQFVAPGCIERMEHIADSEFEIMTYTDAIKALEASEQKFEFPVSWGLDLQSEHERYLAEVLCKKPVIVTNYPQEIKGFYMRLNDDGKTVAAMDVLAPGIGEIIGGSQREERLEILDRRMDECNLNKEHYQWYRDLRRYGTVPHAGFGLGFERLISYVTGVSNVRDVIPFPRTPGHADY.

The protein belongs to the class-II aminoacyl-tRNA synthetase family. Homodimer.

It localises to the cytoplasm. It catalyses the reaction tRNA(Asn) + L-asparagine + ATP = L-asparaginyl-tRNA(Asn) + AMP + diphosphate + H(+). The sequence is that of Asparagine--tRNA ligase from Legionella pneumophila (strain Lens).